Consider the following 556-residue polypeptide: Non-structural maintenance of chromosome element 5 (556 aa).

As to quaternary structure, component of the Smc5-Smc6 complex which consists of KRE29, MMS21, NSE1, NSE3, NSE4, NSE5, SMC5 and SMC6. Interacts with KRE29.

Its subcellular location is the nucleus. The protein localises to the chromosome. In terms of biological role, acts in a DNA repair pathway for removal of UV-induced DNA damage that is distinct from classical nucleotide excision repair and in repair of ionizing radiation damage. Functions in homologous recombination repair of DNA double strand breaks and in recovery of stalled replication forks. The chain is Non-structural maintenance of chromosome element 5 (NSE5) from Saccharomyces cerevisiae (strain ATCC 204508 / S288c) (Baker's yeast).